Reading from the N-terminus, the 266-residue chain is 3-methyl-2-oxobutanoate hydroxymethyltransferase (266 aa).

Asp-45 and Asp-84 together coordinate Mg(2+). 3-methyl-2-oxobutanoate contacts are provided by residues 45–46 (DS), Asp-84, and Lys-112. Mg(2+) is bound at residue Glu-114. The active-site Proton acceptor is the Glu-181.

The protein belongs to the PanB family. Homodecamer; pentamer of dimers. Requires Mg(2+) as cofactor.

It is found in the cytoplasm. The enzyme catalyses 3-methyl-2-oxobutanoate + (6R)-5,10-methylene-5,6,7,8-tetrahydrofolate + H2O = 2-dehydropantoate + (6S)-5,6,7,8-tetrahydrofolate. Its pathway is cofactor biosynthesis; (R)-pantothenate biosynthesis; (R)-pantoate from 3-methyl-2-oxobutanoate: step 1/2. Catalyzes the reversible reaction in which hydroxymethyl group from 5,10-methylenetetrahydrofolate is transferred onto alpha-ketoisovalerate to form ketopantoate. In Pseudomonas syringae pv. syringae (strain B728a), this protein is 3-methyl-2-oxobutanoate hydroxymethyltransferase.